The chain runs to 625 residues: 1-deoxy-D-xylulose-5-phosphate synthase 1 (625 aa).

Residues H74 and 115-117 (GHT) contribute to the thiamine diphosphate site. D146 contacts Mg(2+). Residues 147 to 148 (GS), N175, Y286, and E368 contribute to the thiamine diphosphate site. N175 contributes to the Mg(2+) binding site.

It belongs to the transketolase family. DXPS subfamily. As to quaternary structure, homodimer. It depends on Mg(2+) as a cofactor. Thiamine diphosphate serves as cofactor.

The enzyme catalyses D-glyceraldehyde 3-phosphate + pyruvate + H(+) = 1-deoxy-D-xylulose 5-phosphate + CO2. The protein operates within metabolic intermediate biosynthesis; 1-deoxy-D-xylulose 5-phosphate biosynthesis; 1-deoxy-D-xylulose 5-phosphate from D-glyceraldehyde 3-phosphate and pyruvate: step 1/1. Catalyzes the acyloin condensation reaction between C atoms 2 and 3 of pyruvate and glyceraldehyde 3-phosphate to yield 1-deoxy-D-xylulose-5-phosphate (DXP). This chain is 1-deoxy-D-xylulose-5-phosphate synthase 1, found in Geobacter metallireducens (strain ATCC 53774 / DSM 7210 / GS-15).